A 398-amino-acid polypeptide reads, in one-letter code: Alpha-2,8-sialyltransferase 8F (398 aa).

At 1-3 (MRP) the chain is on the cytoplasmic side. The helical; Signal-anchor for type II membrane protein transmembrane segment at 4-24 (GGALLALLASLLLLLLLRLLW) threads the bilayer. The Lumenal portion of the chain corresponds to 25 to 398 (CPADAPGRAR…KLQFSKCEVA (374 aa)). Residues Asn-66, Asn-93, Asn-151, and Asn-196 are each glycosylated (N-linked (GlcNAc...) asparagine). Cystine bridges form between Cys-186–Cys-335 and Cys-200–Cys-395. Residues Asn-214, 236–238 (NPS), and 322–324 (STG) contribute to the substrate site. His-370 acts as the Proton donor/acceptor in catalysis.

Belongs to the glycosyltransferase 29 family.

It localises to the golgi apparatus membrane. The catalysed reaction is a ganglioside GM3 + CMP-N-acetyl-beta-neuraminate = a ganglioside GD3 + CMP + H(+). It carries out the reaction a ganglioside GM3 (d18:1(4E)) + CMP-N-acetyl-beta-neuraminate = a ganglioside GD3 (d18:1(4E)) + CMP + H(+). It catalyses the reaction a ganglioside GD1a (d18:1(4E)) + CMP-N-acetyl-beta-neuraminate = a ganglioside GT1a (d18:1(4E)) + CMP + H(+). The enzyme catalyses a ganglioside GD1a + CMP-N-acetyl-beta-neuraminate = a ganglioside GT1a + CMP + H(+). The catalysed reaction is a ganglioside GM1b (d18:1(4E)) + CMP-N-acetyl-beta-neuraminate = a ganglioside GD1c (d18:1(4E)) + CMP + H(+). It carries out the reaction a ganglioside GM1b + CMP-N-acetyl-beta-neuraminate = a ganglioside GD1c + CMP + H(+). It catalyses the reaction a ganglioside GM4 (d18:1(4E)) + CMP-N-acetyl-beta-neuraminate = an N-acetyl-alpha-neuraminosyl-(2-&gt;8)-N-acetyl-alpha-neuraminosyl-(2-&gt;3)-beta-D-galactosyl-(1&lt;-&gt;1')-N-acylsphing-4-enine + CMP + H(+). The enzyme catalyses N-acetyl-alpha-neuraminosyl-(2-&gt;3)-beta-D-galactosyl-(1&lt;-&gt;1')-ceramide + CMP-N-acetyl-beta-neuraminate = N-acetyl-alpha-neuraminosyl-(2-&gt;8)-N-acetyl-alpha-neuraminosyl-(2-&gt;3)-beta-D-galactosyl-(1&lt;-&gt;1')-ceramide + CMP + H(+). The catalysed reaction is a ganglioside GT1b (d18:1(4E)) + CMP-N-acetyl-beta-neuraminate = a ganglioside GQ1b (d18:1(4E)) + CMP + H(+). It carries out the reaction a ganglioside GT1b + CMP-N-acetyl-beta-neuraminate = a ganglioside GQ1b + CMP + H(+). It participates in protein modification; protein glycosylation. Its function is as follows. Alpha-2,8-sialyltransferase that prefers O-glycans to N-glycans or glycolipids as acceptor substrates. The minimal acceptor substrate is the NeuAc-alpha-2,3(6)-Gal sequence at the non-reducing end of their carbohydrate groups. This Homo sapiens (Human) protein is Alpha-2,8-sialyltransferase 8F.